Here is a 244-residue protein sequence, read N- to C-terminus: Mediator of RNA polymerase II transcription subunit 9 (244 aa).

The segment covering 1–10 (MDQFSGGGGN) has biased composition (gly residues). 2 disordered regions span residues 1–28 (MDQF…TPTN) and 96–131 (QQRL…HTPQ). Positions 13–28 (MIPNVQAQGNFGTPTN) are enriched in polar residues. 2 stretches are compositionally biased toward low complexity: residues 96-111 (QQRL…QSLQ) and 122-131 (TPQSMMHTPQ). Positions 212–239 (KRNVEESEQLLQQRRDLIVEYRKSIEEI) form a coiled coil.

The protein belongs to the plant Mediator complex subunit 9 family. As to quaternary structure, component of the Mediator complex. Interacts with MEE14/CBP1.

Its subcellular location is the nucleus. Its function is as follows. Component of the Mediator complex, a coactivator involved in the regulated transcription of nearly all RNA polymerase II-dependent genes. Mediator functions as a bridge to convey information from gene-specific regulatory proteins to the basal RNA polymerase II transcription machinery. The Mediator complex, having a compact conformation in its free form, is recruited to promoters by direct interactions with regulatory proteins and serves for the assembly of a functional pre-initiation complex with RNA polymerase II and the general transcription factors. The polypeptide is Mediator of RNA polymerase II transcription subunit 9 (MED9) (Arabidopsis thaliana (Mouse-ear cress)).